We begin with the raw amino-acid sequence, 177 residues long: ATP synthase subunit b (177 aa).

Residues 16–36 (HLLLANMIVTIVVFLLLLILL) form a helical membrane-spanning segment.

It belongs to the ATPase B chain family. As to quaternary structure, F-type ATPases have 2 components, F(1) - the catalytic core - and F(0) - the membrane proton channel. F(1) has five subunits: alpha(3), beta(3), gamma(1), delta(1), epsilon(1). F(0) has three main subunits: a(1), b(2) and c(10-14). The alpha and beta chains form an alternating ring which encloses part of the gamma chain. F(1) is attached to F(0) by a central stalk formed by the gamma and epsilon chains, while a peripheral stalk is formed by the delta and b chains.

The protein resides in the cell membrane. F(1)F(0) ATP synthase produces ATP from ADP in the presence of a proton or sodium gradient. F-type ATPases consist of two structural domains, F(1) containing the extramembraneous catalytic core and F(0) containing the membrane proton channel, linked together by a central stalk and a peripheral stalk. During catalysis, ATP synthesis in the catalytic domain of F(1) is coupled via a rotary mechanism of the central stalk subunits to proton translocation. Its function is as follows. Component of the F(0) channel, it forms part of the peripheral stalk, linking F(1) to F(0). In Exiguobacterium sibiricum (strain DSM 17290 / CCUG 55495 / CIP 109462 / JCM 13490 / 255-15), this protein is ATP synthase subunit b.